The following is a 335-amino-acid chain: Vitamin B12 import system permease protein BtuC (335 aa).

8 consecutive transmembrane segments (helical) span residues 25–45 (LVVM…VWIW), 67–87 (MAVI…QALF), 94–113 (PGLL…AVLL), 117–139 (LLPI…SILL), 153–173 (LLVG…AVYF), 243–263 (VLAI…ISFI), 281–301 (RLLA…DVVA), and 309–329 (ELPI…WLLI).

Belongs to the binding-protein-dependent transport system permease family. FecCD subfamily. The complex is composed of two ATP-binding proteins (BtuD), two transmembrane proteins (BtuC) and a solute-binding protein (BtuF).

It is found in the cell inner membrane. Part of the ABC transporter complex BtuCDF involved in vitamin B12 import. Involved in the translocation of the substrate across the membrane. In Yersinia pseudotuberculosis serotype O:1b (strain IP 31758), this protein is Vitamin B12 import system permease protein BtuC.